The primary structure comprises 152 residues: Large ribosomal subunit protein bL9 (152 aa).

Belongs to the bacterial ribosomal protein bL9 family.

Its function is as follows. Binds to the 23S rRNA. This Prochlorococcus marinus (strain SARG / CCMP1375 / SS120) protein is Large ribosomal subunit protein bL9.